Here is a 287-residue protein sequence, read N- to C-terminus: 4-hydroxybenzoate octaprenyltransferase (287 aa).

A run of 9 helical transmembrane segments spans residues 19 to 39 (PIGT…ASSG), 43 to 63 (LQML…GCAI), 94 to 114 (VVVA…LNIF), 118 to 138 (LSVL…FLAI), 142 to 162 (VLGI…LDFI), 167 to 187 (WVLF…YAMV), 209 to 229 (VLAI…VAHL), 235 to 255 (YFLI…KLVS), and 263 to 283 (FLAF…IVLG).

This sequence belongs to the UbiA prenyltransferase family. It depends on Mg(2+) as a cofactor.

Its subcellular location is the cell inner membrane. It carries out the reaction all-trans-octaprenyl diphosphate + 4-hydroxybenzoate = 4-hydroxy-3-(all-trans-octaprenyl)benzoate + diphosphate. The protein operates within cofactor biosynthesis; ubiquinone biosynthesis. In terms of biological role, catalyzes the prenylation of para-hydroxybenzoate (PHB) with an all-trans polyprenyl group. Mediates the second step in the final reaction sequence of ubiquinone-8 (UQ-8) biosynthesis, which is the condensation of the polyisoprenoid side chain with PHB, generating the first membrane-bound Q intermediate 3-octaprenyl-4-hydroxybenzoate. The polypeptide is 4-hydroxybenzoate octaprenyltransferase (Polynucleobacter asymbioticus (strain DSM 18221 / CIP 109841 / QLW-P1DMWA-1) (Polynucleobacter necessarius subsp. asymbioticus)).